We begin with the raw amino-acid sequence, 306 residues long: Zinc finger protein 625 (306 aa).

The segment at 31–53 (PRVKSCGEVSVGHASLNRHHRAD) adopts a C2H2-type 1; degenerate zinc-finger fold. C2H2-type zinc fingers lie at residues 69-91 (YKCT…EWAH), 97-119 (YDCE…RIMH), 125-147 (YKCN…KRTH), 153-175 (YECK…ERTH), 181-203 (YECS…KITH), 209-231 (YECK…ERTH), 237-259 (YECK…GRTH), and 265-287 (YECK…ERTH). Tyrosine 209 bears the Phosphotyrosine mark. The interval 287 to 306 (HTGEKPCSSNTSKGQGEKIA) is disordered.

The protein belongs to the krueppel C2H2-type zinc-finger protein family.

Its subcellular location is the nucleus. Its function is as follows. May be involved in transcriptional regulation. The sequence is that of Zinc finger protein 625 (ZNF625) from Homo sapiens (Human).